Consider the following 110-residue polypeptide: Bowman-Birk type proteinase inhibitor (110 aa).

A signal peptide spans M1 to S19. Positions A20 to N39 are excised as a propeptide. 7 disulfides stabilise this stretch: C47-C101, C48-C63, C51-C97, C53-C61, C71-C78, C75-C90, and C80-C88.

The protein belongs to the Bowman-Birk serine protease inhibitor family.

Inhibitor of trypsin and of chymotrypsin. The polypeptide is Bowman-Birk type proteinase inhibitor (Glycine max (Soybean)).